A 249-amino-acid chain; its full sequence is Chromosome-partitioning ATPase Soj (249 aa).

10 residues coordinate ATP: K15, G16, G17, V18, G19, K20, T21, T22, P207, and N209. G17 provides a ligand contact to ADP. Positions 19, 20, 21, 22, 207, and 209 each coordinate ADP. Mg(2+) is bound at residue T21.

Belongs to the ParA family. As to quaternary structure, monomer in the absence of nucleotides or presence of ADP, in the presence of ATP is found in a monomer-dimer equilibrium. ATP-binding is required for DNA-binding. Probably interacts with Spo0J.

The enzyme catalyses ATP + H2O = ADP + phosphate + H(+). ATPase activity is stimulated 10-fold in the presence of Spo0J and parS DNA (a plasmid centromere-like site or plasmid DNA itself). The first 20 residues of Spo0J stimulate its ATPase activity by 8%. Its function is as follows. ATPase probably involved in chromosome partitioning. Cooperatively binds dsDNA, forming nucleoprotein filaments in a strictly ATP-dependent fashion. Can also bind ssDNA with lower affinity. This Thermus thermophilus (strain ATCC BAA-163 / DSM 7039 / HB27) protein is Chromosome-partitioning ATPase Soj.